A 336-amino-acid chain; its full sequence is Solute-binding protein Csal_2479 (336 aa).

A signal peptide spans 1–33 (MQTNKRLKMASCVKAAAMLGMLLSVSISTTAQA). Beta-D-glucuronate is bound by residues H42, Q80, R156, R177, Y200, 217-218 (NN), and E244.

It belongs to the bacterial solute-binding protein 7 family. In terms of assembly, the complex is comprised of an extracytoplasmic solute-binding protein and a heteromeric permease formed by two transmembrane proteins.

Its subcellular location is the periplasm. Functionally, solute-binding protein that binds D-glucuronate (in vitro). Probably part of a tripartite ATP-independent periplasmic (TRAP) transport system that mediates solute transport into the cytoplasm. The polypeptide is Solute-binding protein Csal_2479 (Chromohalobacter salexigens (strain ATCC BAA-138 / DSM 3043 / CIP 106854 / NCIMB 13768 / 1H11)).